Reading from the N-terminus, the 367-residue chain is Glutamate 5-kinase (367 aa).

K10 provides a ligand contact to ATP. The substrate site is built by S50, D137, and N149. ATP-binding positions include 169–170 (TD) and 211–217 (TGGMSTK). The region spanning 275 to 353 (AGEITVDEGA…QEIDAILGYE (79 aa)) is the PUA domain.

This sequence belongs to the glutamate 5-kinase family.

It localises to the cytoplasm. The catalysed reaction is L-glutamate + ATP = L-glutamyl 5-phosphate + ADP. The protein operates within amino-acid biosynthesis; L-proline biosynthesis; L-glutamate 5-semialdehyde from L-glutamate: step 1/2. Catalyzes the transfer of a phosphate group to glutamate to form L-glutamate 5-phosphate. This Escherichia fergusonii (strain ATCC 35469 / DSM 13698 / CCUG 18766 / IAM 14443 / JCM 21226 / LMG 7866 / NBRC 102419 / NCTC 12128 / CDC 0568-73) protein is Glutamate 5-kinase.